The sequence spans 253 residues: Ribonuclease 3 (253 aa).

An RNase III domain is found at 29-157 (VDELQKTIGH…MLGAVFLDAG (129 aa)). Residue Glu70 participates in Mg(2+) binding. Asp74 is an active-site residue. Residues Asp143 and Glu146 each contribute to the Mg(2+) site. The active site involves Glu146. The region spanning 184–253 (DYKSQLQELT…AARAVATLDK (70 aa)) is the DRBM domain.

It belongs to the ribonuclease III family. Homodimer. It depends on Mg(2+) as a cofactor.

It localises to the cytoplasm. The enzyme catalyses Endonucleolytic cleavage to 5'-phosphomonoester.. Its function is as follows. Digests double-stranded RNA. Involved in the processing of primary rRNA transcript to yield the immediate precursors to the large and small rRNAs (23S and 16S). Processes some mRNAs, and tRNAs when they are encoded in the rRNA operon. Processes pre-crRNA and tracrRNA of type II CRISPR loci if present in the organism. The polypeptide is Ribonuclease 3 (Nitratidesulfovibrio vulgaris (strain ATCC 29579 / DSM 644 / CCUG 34227 / NCIMB 8303 / VKM B-1760 / Hildenborough) (Desulfovibrio vulgaris)).